The sequence spans 75 residues: CDC42 small effector protein 1 (75 aa).

S-palmitoyl cysteine attachment occurs at residues Cys10 and Cys11. In terms of domain architecture, CRIB spans 30–43 (IGEPTNFVHLTHIG). The interval 45 to 75 (GEMADGMQPSGPIKEQMRSKVPHANGRNSLL) is disordered.

The protein belongs to the CDC42SE/SPEC family.

It localises to the cytoplasm. The protein resides in the cytoskeleton. It is found in the cell membrane. Its function is as follows. Probably involved in the organization of the actin cytoskeleton by acting downstream of CDC42, inducing actin filament assembly. The protein is CDC42 small effector protein 1 (cdc42se1) of Danio rerio (Zebrafish).